We begin with the raw amino-acid sequence, 289 residues long: Aquaporin PIP1-1 (289 aa).

Positions 1–36 (MEGKEEDVRLGANRYSERQPIGTAAQGAGDDKDYKE) are disordered. The next 2 helical transmembrane spans lie at 58 to 78 (IAEF…VMGV) and 93 to 115 (IAWS…SGGH). The NPA 1 motif lies at 117 to 119 (NPA). A run of 3 helical transmembrane segments spans residues 136–156 (IFYI…VKGF), 178–198 (GDGL…VFSA), and 212–232 (ILAP…TIPI). Residues 238–240 (NPA) carry the NPA 2 motif. A helical transmembrane segment spans residues 260 to 280 (IFWVGPFVGAALAAIYHQVII).

It belongs to the MIP/aquaporin (TC 1.A.8) family. PIP (TC 1.A.8.11) subfamily. In terms of tissue distribution, expressed in roots, leaves and anthers.

It is found in the cell membrane. May function as water channel to facilitate the transport of water across cell membrane. This Oryza sativa subsp. japonica (Rice) protein is Aquaporin PIP1-1 (PIP1-1).